A 293-amino-acid polypeptide reads, in one-letter code: MHWHLAITWTVIILTFSECYNQTCPCPCICVNSTTVSISTSETTSKNITPTTTTNSKKTTSSIATTTPSLVTTGKVVSTAASSTIISQTNRSHTSNAITTPKTRFEYNITGYVGQEVTLNFTGSWNYIQWFRYGSPGWLYSSEPICTVTSNYHHTFPRGALCFDCDMTKLLIYDLTLNDSGKYVVKRTRHDNQYEEACYSLTVIFANTTSIVTNRTCDRKRTENTDTTNHEIGKHIIETIKKANIPLGIHAVWAGIVVSVALIALYMGNRRRPRKPRYTRLPKYDPDESWTKT.

A signal peptide spans 1 to 19 (MHWHLAITWTVIILTFSEC). Residues 245–265 (IPLGIHAVWAGIVVSVALIAL) traverse the membrane as a helical segment.

It is found in the virion membrane. Functionally, may play a role in modifying tropism or in modulating cell signaling during virus entry. Since RL13 expression severely impairs HCMV replication in epithelial cell cultures, it may act as a regulator promoting persistence by suppressing the switch to fully lytic infection. The protein is Membrane protein RL13 (RL13) of Human cytomegalovirus (strain Merlin) (HHV-5).